Reading from the N-terminus, the 313-residue chain is Dimethyladenosine transferase (313 aa).

The segment at 1 to 21 (MPKVKSGAIGRRRGRQEQRRE) is disordered. Residues His-37, Leu-39, Gly-64, Glu-85, Asp-113, and Asn-128 each contribute to the S-adenosyl-L-methionine site.

Belongs to the class I-like SAM-binding methyltransferase superfamily. rRNA adenine N(6)-methyltransferase family. As to quaternary structure, part of the small subunit (SSU) processome, composed of more than 70 proteins and the RNA chaperone small nucleolar RNA (snoRNA) U3.

It is found in the nucleus. Its subcellular location is the nucleoplasm. It localises to the nucleolus. The catalysed reaction is adenosine(1779)/adenosine(1780) in 18S rRNA + 4 S-adenosyl-L-methionine = N(6)-dimethyladenosine(1779)/N(6)-dimethyladenosine(1780) in 18S rRNA + 4 S-adenosyl-L-homocysteine + 4 H(+). Functionally, specifically dimethylates two adjacent adenosines in the loop of a conserved hairpin near the 3'-end of 18S rRNA in the 40S particle. Involved in the pre-rRNA processing steps leading to small-subunit rRNA production independently of its RNA-modifying catalytic activity. Part of the small subunit (SSU) processome, first precursor of the small eukaryotic ribosomal subunit. During the assembly of the SSU processome in the nucleolus, many ribosome biogenesis factors, an RNA chaperone and ribosomal proteins associate with the nascent pre-rRNA and work in concert to generate RNA folding, modifications, rearrangements and cleavage as well as targeted degradation of pre-ribosomal RNA by the RNA exosome. This is Dimethyladenosine transferase (DIMT1) from Macaca fascicularis (Crab-eating macaque).